Reading from the N-terminus, the 137-residue chain is Proofreading thioesterase EntH (137 aa).

The active-site Nucleophile or proton acceptor is the glutamate 63.

This sequence belongs to the thioesterase PaaI family. Homotetramer. Dimer of dimers. Interacts specifically with the aryl carrier protein (ArCP) domain of EntB.

It is found in the cytoplasm. It functions in the pathway siderophore biosynthesis; enterobactin biosynthesis. In terms of biological role, required for optimal enterobactin synthesis. Acts as a proofreading enzyme that prevents EntB misacylation by hydrolyzing the thioester bound existing between EntB and wrongly charged molecules. The sequence is that of Proofreading thioesterase EntH from Cronobacter turicensis (strain DSM 18703 / CCUG 55852 / LMG 23827 / z3032).